Here is a 186-residue protein sequence, read N- to C-terminus: ATP synthase subunit delta (186 aa).

Belongs to the ATPase delta chain family. As to quaternary structure, F-type ATPases have 2 components, F(1) - the catalytic core - and F(0) - the membrane proton channel. F(1) has five subunits: alpha(3), beta(3), gamma(1), delta(1), epsilon(1). F(0) has three main subunits: a(1), b(2) and c(10-14). The alpha and beta chains form an alternating ring which encloses part of the gamma chain. F(1) is attached to F(0) by a central stalk formed by the gamma and epsilon chains, while a peripheral stalk is formed by the delta and b chains.

Its subcellular location is the cell inner membrane. In terms of biological role, f(1)F(0) ATP synthase produces ATP from ADP in the presence of a proton or sodium gradient. F-type ATPases consist of two structural domains, F(1) containing the extramembraneous catalytic core and F(0) containing the membrane proton channel, linked together by a central stalk and a peripheral stalk. During catalysis, ATP synthesis in the catalytic domain of F(1) is coupled via a rotary mechanism of the central stalk subunits to proton translocation. This protein is part of the stalk that links CF(0) to CF(1). It either transmits conformational changes from CF(0) to CF(1) or is implicated in proton conduction. The chain is ATP synthase subunit delta from Leptospira interrogans serogroup Icterohaemorrhagiae serovar copenhageni (strain Fiocruz L1-130).